The following is a 218-amino-acid chain: 3,4-dihydroxy-2-butanone 4-phosphate synthase (218 aa).

Residues 37–38 (RE), Asp42, 150–154 (RSGHT), and Glu174 each bind D-ribulose 5-phosphate. Glu38 serves as a coordination point for Mg(2+). His153 provides a ligand contact to Mg(2+).

The protein belongs to the DHBP synthase family. As to quaternary structure, homodimer. Mg(2+) is required as a cofactor. Mn(2+) serves as cofactor.

The enzyme catalyses D-ribulose 5-phosphate = (2S)-2-hydroxy-3-oxobutyl phosphate + formate + H(+). It participates in cofactor biosynthesis; riboflavin biosynthesis; 2-hydroxy-3-oxobutyl phosphate from D-ribulose 5-phosphate: step 1/1. Catalyzes the conversion of D-ribulose 5-phosphate to formate and 3,4-dihydroxy-2-butanone 4-phosphate. This is 3,4-dihydroxy-2-butanone 4-phosphate synthase from Hamiltonella defensa subsp. Acyrthosiphon pisum (strain 5AT).